Here is a 1163-residue protein sequence, read N- to C-terminus: GTPase-activating protein (1163 aa).

C2 domains are found at residues 26-148 (PSSN…DHWF) and 261-419 (TTST…SAWY). A Ras-GAP domain is found at 520–737 (ERIAPIIKAL…DAVKHFLEVI (218 aa)). Residues 762 to 860 (LKEGLMTKYP…WFDLLHKICL (99 aa)) form the PH domain. The segment at 862–898 (NSIRMQYFHPSAFVSGFYSCCGRSDENSPGCKKVLDK) adopts a Btk-type zinc-finger fold. Zn(2+) is bound by residues His870, Cys881, Cys882, and Cys892. Disordered stretches follow at residues 1026-1051 (LNQQ…LQQF) and 1091-1163 (PFHQ…PPIY). Residues 1091 to 1157 (PFHQQQQQHH…APPSTTSSSQ (67 aa)) show a composition bias toward low complexity.

As to quaternary structure, interacts with sty. In terms of tissue distribution, in third instar larvae eye imaginal disk, expressed in cells posterior to the morphogenetic furrow, in all photoreceptor and cone cell precursors as well as in still uncommitted cells.

Its function is as follows. Inhibitory regulator of the Ras-cyclic AMP pathway. May function as a negative regulator of Ras85D/Ras1 in the sev signaling pathway. Acts cell autonomously in cone cell precursors as a negative regulator of R7 photoreceptor cell determination. The chain is GTPase-activating protein (RasGAP1) from Drosophila melanogaster (Fruit fly).